A 308-amino-acid chain; its full sequence is Ribonuclease Z (308 aa).

Residues H60, H62, D64, H65, H140, D209, and H269 each contribute to the Zn(2+) site. Residue D64 is the Proton acceptor of the active site.

Belongs to the RNase Z family. As to quaternary structure, homodimer. Zn(2+) is required as a cofactor.

It catalyses the reaction Endonucleolytic cleavage of RNA, removing extra 3' nucleotides from tRNA precursor, generating 3' termini of tRNAs. A 3'-hydroxy group is left at the tRNA terminus and a 5'-phosphoryl group is left at the trailer molecule.. Functionally, zinc phosphodiesterase, which displays some tRNA 3'-processing endonuclease activity. Probably involved in tRNA maturation, by removing a 3'-trailer from precursor tRNA. This is Ribonuclease Z from Methanococcus maripaludis (strain DSM 14266 / JCM 13030 / NBRC 101832 / S2 / LL).